Here is a 485-residue protein sequence, read N- to C-terminus: MDILKSYHLLAAAYSAPAWASFMAGAFLVLTLSLSLFLVFDHLSTYKNPEEQKFLIGVILMVPCYSIESFASLVKPSISVDCGILRDCYESFAMYCFGRYLVACIGGEERTIEFMERQGRKSFKTPLLDHKDEKGIIKHPFPMNLFLKPWRLSPWFYQVVKFGIVQYMIIKSLTALTALILEAFGVYCEGEFKWGCGYPYLAVVLNFSQSWALYCLVQFYGATKDELAHIQPLAKFLTFKSIVFLTWWQGVAIALLSSLGLFKSSIAQSLQLKTSVQDFIICIEMGIASVVHLYVFPAKPYGLMGDRFTGSVSVLGDYASVDCPIDPDEIRDSERPTKVRLPHPDVDIRSGMTIKESMRDVFVGGGEYIVKDVRFTVTQAVEPMEKSITKFNEKLHKISQNIKKHDKEKRRVKDDSCMSSSPSRRVIRGIDDPLLNGSFSDSGVTRTKKHRRKSGYTSAESGGESSSDQAYGGFEVRGRRWITKD.

Topologically, residues 1 to 19 (MDILKSYHLLAAAYSAPAW) are cytoplasmic. Residues 20–40 (ASFMAGAFLVLTLSLSLFLVF) traverse the membrane as a helical segment. The Lumenal portion of the chain corresponds to 41–53 (DHLSTYKNPEEQK). A helical membrane pass occupies residues 54 to 74 (FLIGVILMVPCYSIESFASLV). Over 75-167 (KPSISVDCGI…QVVKFGIVQY (93 aa)) the chain is Cytoplasmic. The chain crosses the membrane as a helical span at residues 168-188 (MIIKSLTALTALILEAFGVYC). At 189 to 196 (EGEFKWGC) the chain is on the lumenal side. A helical transmembrane segment spans residues 197–217 (GYPYLAVVLNFSQSWALYCLV). Residues 218–241 (QFYGATKDELAHIQPLAKFLTFKS) are Cytoplasmic-facing. The chain crosses the membrane as a helical span at residues 242–262 (IVFLTWWQGVAIALLSSLGLF). The Lumenal segment spans residues 263 to 277 (KSSIAQSLQLKTSVQ). The chain crosses the membrane as a helical span at residues 278–298 (DFIICIEMGIASVVHLYVFPA). Residues 299–485 (KPYGLMGDRF…VRGRRWITKD (187 aa)) are Cytoplasmic-facing. Positions 384 to 415 (MEKSITKFNEKLHKISQNIKKHDKEKRRVKDD) form a coiled coil. The tract at residues 400–485 (QNIKKHDKEK…VRGRRWITKD (86 aa)) is disordered. Basic and acidic residues predominate over residues 403–416 (KKHDKEKRRVKDDS). Residues 455–469 (GYTSAESGGESSSDQ) show a composition bias toward polar residues. The span at 476-485 (VRGRRWITKD) shows a compositional bias: basic and acidic residues.

Belongs to the TMEM184 family.

Its subcellular location is the endomembrane system. It localises to the cell membrane. The protein resides in the cytoplasm. The protein localises to the cytosol. Its function is as follows. Required for programmed cell death (PCD) associated with hypersensitive response (HR). Involved both in the induction of EDS1/PAD4 mediated HR and in accelerated cell death in the acd11 mutant. Not required for HR induction elicited through pathways exclusively dependent on CC-NB-LRR resistance proteins. The sequence is that of Protein LAZ1 from Arabidopsis thaliana (Mouse-ear cress).